The following is a 260-amino-acid chain: Octanoyltransferase (260 aa).

The region spanning 42 to 241 is the BPL/LPL catalytic domain; the sequence is PQVPDGLLLL…SFCQVFGLQA (200 aa). Residues 97–104, 172–174, and 185–187 each bind substrate; these read RGGEVTYH, AIG, and GFA. The active-site Acyl-thioester intermediate is C203.

The protein belongs to the LipB family.

Its subcellular location is the cytoplasm. It carries out the reaction octanoyl-[ACP] + L-lysyl-[protein] = N(6)-octanoyl-L-lysyl-[protein] + holo-[ACP] + H(+). It participates in protein modification; protein lipoylation via endogenous pathway; protein N(6)-(lipoyl)lysine from octanoyl-[acyl-carrier-protein]: step 1/2. Its function is as follows. Catalyzes the transfer of endogenously produced octanoic acid from octanoyl-acyl-carrier-protein onto the lipoyl domains of lipoate-dependent enzymes. Lipoyl-ACP can also act as a substrate although octanoyl-ACP is likely to be the physiological substrate. The protein is Octanoyltransferase of Synechococcus sp. (strain JA-3-3Ab) (Cyanobacteria bacterium Yellowstone A-Prime).